Consider the following 226-residue polypeptide: Probable functional amyloid protease FapD (226 aa).

A signal peptide spans 1–18 (MRRATLCLLLLLAGPSWA). A Peptidase C39 domain is found at 50 to 180 (QKTDFSCGAA…AGWNGIVFAV (131 aa)). Residue C56 is part of the active site.

Belongs to the FapD family.

Its subcellular location is the periplasm. Its function is as follows. Probable cysteine protease that is involved in processing fibril precursors. Upon overexpression of the endogenous six-gene locus (fapA-fapF) in situ, cells form large clumps during liquid growth, make large amounts of biofilm and produce amyloid fibrils. Expression of the 6 gene operon in E.coli strain BL21(DE3) induces flocculation and biofilm formation with copious extracellular fibrils. The chain is Probable functional amyloid protease FapD from Pseudomonas fluorescens.